Consider the following 239-residue polypeptide: ATP-dependent dethiobiotin synthetase BioD (239 aa).

15-20 (EIGKTF) is a binding site for ATP. Threonine 19 serves as a coordination point for Mg(2+). Lysine 40 is a catalytic residue. ATP is bound by residues aspartate 57, 118 to 121 (EGVG), and 178 to 179 (NH). The Mg(2+) site is built by aspartate 57 and glutamate 118.

Belongs to the dethiobiotin synthetase family. Homodimer. Mg(2+) serves as cofactor.

The protein localises to the cytoplasm. It carries out the reaction (7R,8S)-7,8-diammoniononanoate + CO2 + ATP = (4R,5S)-dethiobiotin + ADP + phosphate + 3 H(+). The protein operates within cofactor biosynthesis; biotin biosynthesis; biotin from 7,8-diaminononanoate: step 1/2. Its function is as follows. Catalyzes a mechanistically unusual reaction, the ATP-dependent insertion of CO2 between the N7 and N8 nitrogen atoms of 7,8-diaminopelargonic acid (DAPA, also called 7,8-diammoniononanoate) to form a ureido ring. The chain is ATP-dependent dethiobiotin synthetase BioD from Burkholderia ambifaria (strain ATCC BAA-244 / DSM 16087 / CCUG 44356 / LMG 19182 / AMMD) (Burkholderia cepacia (strain AMMD)).